The following is a 494-amino-acid chain: MVSRRGSETKAIVCVLTDRIRISNQWVSHLSFAGLLGVAGFVFAQQHGLFRNLNNLKLFSGREKDSGDDSFLVPGLQNLGNNCFLNVILQALASCKDFRSFLQWVLEDARGSLAGEQEEQLPLTFALSALLQELGTVGSRRSVSNPRKVMVTLTDYAKNFNLTSQQDAAEALLHLISSLQEEIVVCYRPSQSSNLSDILFSRNLRMLAPSEGLHGLMELKRWHKHLRGPFDGILGSTLMCRTCSSQISLEFQFFHTLPLSPLLHHGGYNIMSGCTLEHCLKKFLNTEKVENYFCYRCWHGAALKYLSVIGAAETEIEKLRSCGGEDQCDCKTSLHLQRMPWSNSYSHILKQLIIARFPKLLCIQVQRASFNMFEEFKLSGHIAFPLVLNLSLFTPSSIGVNIEERIEMSSEYQKPEASKNHGMYRLVTVVEHFGRTGSGHYTVYRSVRVFSQEEEEEDCDEDLSWFSISDSEVCRVSESDVLGAEASLLFYERL.

A helical membrane pass occupies residues 30 to 50 (LSFAGLLGVAGFVFAQQHGLF). Residues 74–494 (PGLQNLGNNC…EASLLFYERL (421 aa)) form the USP domain. The active-site Nucleophile is C83. Catalysis depends on H440, which acts as the Proton acceptor.

The protein belongs to the peptidase C19 family.

Its subcellular location is the membrane. It carries out the reaction Thiol-dependent hydrolysis of ester, thioester, amide, peptide and isopeptide bonds formed by the C-terminal Gly of ubiquitin (a 76-residue protein attached to proteins as an intracellular targeting signal).. Recognizes and hydrolyzes the peptide bond at the C-terminal Gly of ubiquitin. Involved in the processing of poly-ubiquitin precursors as well as that of ubiquitinated proteins. The sequence is that of Ubiquitin carboxyl-terminal hydrolase 27 (UBP27) from Arabidopsis thaliana (Mouse-ear cress).